Reading from the N-terminus, the 342-residue chain is Oxygen-dependent coproporphyrinogen-III oxidase (342 aa).

Residue Ser98 coordinates substrate. Positions 102 and 112 each coordinate a divalent metal cation. His112 serves as the catalytic Proton donor. Asn114–Arg116 contacts substrate. The a divalent metal cation site is built by His146 and His176. Residues Tyr266 to Glu301 form an important for dimerization region.

Belongs to the aerobic coproporphyrinogen-III oxidase family. Homodimer. A divalent metal cation serves as cofactor.

Its subcellular location is the cytoplasm. It catalyses the reaction coproporphyrinogen III + O2 + 2 H(+) = protoporphyrinogen IX + 2 CO2 + 2 H2O. Its pathway is porphyrin-containing compound metabolism; protoporphyrin-IX biosynthesis; protoporphyrinogen-IX from coproporphyrinogen-III (O2 route): step 1/1. Functionally, involved in the heme and chlorophyll biosynthesis. Catalyzes the aerobic oxidative decarboxylation of propionate groups of rings A and B of coproporphyrinogen-III to yield the vinyl groups in protoporphyrinogen-IX. This Prochlorococcus marinus (strain MIT 9301) protein is Oxygen-dependent coproporphyrinogen-III oxidase.